We begin with the raw amino-acid sequence, 1367 residues long: Protein patched homolog 3 (1367 aa).

The Cytoplasmic portion of the chain corresponds to 1 to 97; it reads MSFPDEETDL…WLFRIGCFVQ (97 aa). A helical membrane pass occupies residues 98–118; the sequence is RWAWSTIFISLFLYCLCLGGL. Residues 119–625 are Extracellular-facing; sequence RHVTIETDLV…IADMLEEFSQ (507 aa). N-linked (GlcNAc...) asparagine glycosylation is found at N235, N310, N454, and N591. The helical transmembrane segment at 626–646 threads the bilayer; the sequence is FNYIIIVIGYILMVIYAAFTQ. Positions 627-788 constitute an SSD domain; that stretch reads NYIIIVIGYI…MFIFPAMIGI (162 aa). Topologically, residues 647-659 are cytoplasmic; it reads GRFQGWWLAVQSN. The chain crosses the membrane as a helical span at residues 660–680; that stretch reads VALAICGVILVTISSICGLGF. Over 681–694 the chain is Extracellular; the sequence is ATHLGINFNAATTQ. A helical transmembrane segment spans residues 695–715; the sequence is VVPFLSLGLGIDDMFLLLHNY. The Cytoplasmic segment spans residues 716 to 737; that stretch reads DEIINICNKNEIGVLLKETGMS. The chain crosses the membrane as a helical span at residues 738–758; the sequence is VMLTSINNILAFISGYVLPIP. Residues 759–767 are Extracellular-facing; the sequence is ALRSFCSQT. A helical membrane pass occupies residues 768-788; the sequence is AILLAFNLIFLMFIFPAMIGI. Topologically, residues 789–863 are cytoplasmic; the sequence is DLRRQRKGKR…KIYIPALKNN (75 aa). A helical transmembrane segment spans residues 864–884; it reads VVKACVLIGTTTAVVFGLYGM. Residues 885–1143 lie on the Extracellular side of the membrane; it reads YTSTLGLELA…WEQYLTLRWN (259 aa). A helical transmembrane segment spans residues 1144-1164; the sequence is LFQAICIIALAVFCVISILMF. Residues 1165-1171 are Cytoplasmic-facing; it reads NPWAATL. Residues 1172–1192 form a helical membrane-spanning segment; the sequence is IMCIVVITTIELGGFMGLMGI. Residues 1193 to 1199 lie on the Extracellular side of the membrane; the sequence is KMNPISA. The chain crosses the membrane as a helical span at residues 1200–1220; it reads VTLICAVGIGVEFTAHVELAF. Over 1221 to 1237 the chain is Cytoplasmic; that stretch reads LTALGTIDQRLESCLQH. Residues 1238–1258 form a helical membrane-spanning segment; sequence MFVPVYHGAISTFLGVVMLVF. Residues 1259-1273 are Extracellular-facing; the sequence is SEFDFVVTYFFYTMT. Residues 1274-1294 traverse the membrane as a helical segment; sequence LLVALGVFNGLCVLPVILTLV. Topologically, residues 1295 to 1367 are cytoplasmic; the sequence is GPKPELTPTD…SDDESSPAHK (73 aa). The disordered stretch occupies residues 1302 to 1367; it reads PTDGSSVLPP…SDDESSPAHK (66 aa). Low complexity predominate over residues 1346 to 1356; that stretch reads RDSPSTSSASH.

The protein belongs to the patched family. As to expression, in males, expressed in the precursor and mature sensory rays, the cloaca, and pre-anal ganglia and cephalic neurons. Also expressed in five cells in the valve region between the seminal vesicle and vas deferens of the somatic gonad.

The protein localises to the apical cell membrane. It is found in the cell junction. It localises to the adherens junction. Functionally, regulates osmosis during embryonic development. Required for larval development and in particular is involved in larval molting. The polypeptide is Protein patched homolog 3 (Caenorhabditis elegans).